Here is a 417-residue protein sequence, read N- to C-terminus: Serine hydroxymethyltransferase (417 aa).

Residues L121 and G125–L127 each bind (6S)-5,6,7,8-tetrahydrofolate. N6-(pyridoxal phosphate)lysine is present on K229. S355 to F357 contributes to the (6S)-5,6,7,8-tetrahydrofolate binding site.

Belongs to the SHMT family. Homodimer. Requires pyridoxal 5'-phosphate as cofactor.

Its subcellular location is the cytoplasm. It catalyses the reaction (6R)-5,10-methylene-5,6,7,8-tetrahydrofolate + glycine + H2O = (6S)-5,6,7,8-tetrahydrofolate + L-serine. The protein operates within one-carbon metabolism; tetrahydrofolate interconversion. It functions in the pathway amino-acid biosynthesis; glycine biosynthesis; glycine from L-serine: step 1/1. Its function is as follows. Catalyzes the reversible interconversion of serine and glycine with tetrahydrofolate (THF) serving as the one-carbon carrier. This reaction serves as the major source of one-carbon groups required for the biosynthesis of purines, thymidylate, methionine, and other important biomolecules. Also exhibits THF-independent aldolase activity toward beta-hydroxyamino acids, producing glycine and aldehydes, via a retro-aldol mechanism. This is Serine hydroxymethyltransferase from Shewanella sp. (strain MR-4).